We begin with the raw amino-acid sequence, 483 residues long: UDP-N-acetylmuramoyl-L-alanyl-D-glutamate--2,6-diaminopimelate ligase (483 aa).

Position 30 (Ser-30) interacts with UDP-N-acetyl-alpha-D-muramoyl-L-alanyl-D-glutamate. 109 to 115 (GTNGKTT) contributes to the ATP binding site. Residues 151-152 (TT), Ser-178, and Arg-186 each bind UDP-N-acetyl-alpha-D-muramoyl-L-alanyl-D-glutamate. Lys-218 is modified (N6-carboxylysine). Meso-2,6-diaminopimelate contacts are provided by residues Arg-380, 403–406 (DNPR), Gly-453, and Glu-457. A Meso-diaminopimelate recognition motif motif is present at residues 403–406 (DNPR).

It belongs to the MurCDEF family. MurE subfamily. Mg(2+) is required as a cofactor. In terms of processing, carboxylation is probably crucial for Mg(2+) binding and, consequently, for the gamma-phosphate positioning of ATP.

It is found in the cytoplasm. The enzyme catalyses UDP-N-acetyl-alpha-D-muramoyl-L-alanyl-D-glutamate + meso-2,6-diaminopimelate + ATP = UDP-N-acetyl-alpha-D-muramoyl-L-alanyl-gamma-D-glutamyl-meso-2,6-diaminopimelate + ADP + phosphate + H(+). It functions in the pathway cell wall biogenesis; peptidoglycan biosynthesis. Catalyzes the addition of meso-diaminopimelic acid to the nucleotide precursor UDP-N-acetylmuramoyl-L-alanyl-D-glutamate (UMAG) in the biosynthesis of bacterial cell-wall peptidoglycan. This is UDP-N-acetylmuramoyl-L-alanyl-D-glutamate--2,6-diaminopimelate ligase from Chlamydia trachomatis serovar A (strain ATCC VR-571B / DSM 19440 / HAR-13).